Reading from the N-terminus, the 92-residue chain is Small ribosomal subunit protein uS19 (92 aa).

Belongs to the universal ribosomal protein uS19 family.

Protein S19 forms a complex with S13 that binds strongly to the 16S ribosomal RNA. The chain is Small ribosomal subunit protein uS19 from Borrelia recurrentis (strain A1).